The chain runs to 726 residues: Fatty acid oxidation complex subunit alpha (726 aa).

An enoyl-CoA hydratase/isomerase region spans residues 1-189 (MIYQGENLSV…KIGMVDGIVS (189 aa)). Aspartate 296 contributes to the substrate binding site. The 3-hydroxyacyl-CoA dehydrogenase stretch occupies residues 311 to 726 (EPVKNAAVLG…PKSSVSSPSV (416 aa)). Residues methionine 324, aspartate 343, 400-402 (VVE), lysine 407, and serine 429 each bind NAD(+). Histidine 450 serves as the catalytic For 3-hydroxyacyl-CoA dehydrogenase activity. Asparagine 453 is a binding site for NAD(+). Substrate contacts are provided by asparagine 500 and tyrosine 660.

This sequence in the N-terminal section; belongs to the enoyl-CoA hydratase/isomerase family. The protein in the C-terminal section; belongs to the 3-hydroxyacyl-CoA dehydrogenase family. Heterotetramer of two alpha chains (FadB) and two beta chains (FadA).

It catalyses the reaction a (3S)-3-hydroxyacyl-CoA + NAD(+) = a 3-oxoacyl-CoA + NADH + H(+). It carries out the reaction a (3S)-3-hydroxyacyl-CoA = a (2E)-enoyl-CoA + H2O. The enzyme catalyses a 4-saturated-(3S)-3-hydroxyacyl-CoA = a (3E)-enoyl-CoA + H2O. The catalysed reaction is (3S)-3-hydroxybutanoyl-CoA = (3R)-3-hydroxybutanoyl-CoA. It catalyses the reaction a (3Z)-enoyl-CoA = a 4-saturated (2E)-enoyl-CoA. It carries out the reaction a (3E)-enoyl-CoA = a 4-saturated (2E)-enoyl-CoA. It functions in the pathway lipid metabolism; fatty acid beta-oxidation. Functionally, involved in the aerobic and anaerobic degradation of long-chain fatty acids via beta-oxidation cycle. Catalyzes the formation of 3-oxoacyl-CoA from enoyl-CoA via L-3-hydroxyacyl-CoA. It can also use D-3-hydroxyacyl-CoA and cis-3-enoyl-CoA as substrate. This chain is Fatty acid oxidation complex subunit alpha, found in Aliivibrio salmonicida (strain LFI1238) (Vibrio salmonicida (strain LFI1238)).